Consider the following 173-residue polypeptide: Large ribosomal subunit protein uL10 (173 aa).

The protein belongs to the universal ribosomal protein uL10 family. As to quaternary structure, part of the ribosomal stalk of the 50S ribosomal subunit. The N-terminus interacts with L11 and the large rRNA to form the base of the stalk. The C-terminus forms an elongated spine to which L12 dimers bind in a sequential fashion forming a multimeric L10(L12)X complex.

Forms part of the ribosomal stalk, playing a central role in the interaction of the ribosome with GTP-bound translation factors. The sequence is that of Large ribosomal subunit protein uL10 from Thiobacillus denitrificans (strain ATCC 25259 / T1).